Here is a 163-residue protein sequence, read N- to C-terminus: Cyclic pyranopterin monophosphate synthase (163 aa).

Residues 74–76 (MCH) and 111–112 (ME) contribute to the substrate site. Residue Asp-126 is part of the active site.

The protein belongs to the MoaC family. Homohexamer; trimer of dimers.

The enzyme catalyses (8S)-3',8-cyclo-7,8-dihydroguanosine 5'-triphosphate = cyclic pyranopterin phosphate + diphosphate. The protein operates within cofactor biosynthesis; molybdopterin biosynthesis. Functionally, catalyzes the conversion of (8S)-3',8-cyclo-7,8-dihydroguanosine 5'-triphosphate to cyclic pyranopterin monophosphate (cPMP). In Desulfitobacterium hafniense (strain DSM 10664 / DCB-2), this protein is Cyclic pyranopterin monophosphate synthase.